A 147-amino-acid polypeptide reads, in one-letter code: Transcriptional repressor NrdR (147 aa).

Residues 3–34 (CPFCGHEDTQVAETRESDEGDVIRRRRRCPSC) fold into a zinc finger. The ATP-cone domain occupies 49 to 139 (PAIVKKDGSR…VYRSFEGVDE (91 aa)).

It belongs to the NrdR family. Zn(2+) serves as cofactor.

In terms of biological role, negatively regulates transcription of bacterial ribonucleotide reductase nrd genes and operons by binding to NrdR-boxes. This Methylibium petroleiphilum (strain ATCC BAA-1232 / LMG 22953 / PM1) protein is Transcriptional repressor NrdR.